Reading from the N-terminus, the 1405-residue chain is DNA-directed RNA polymerase subunit beta' (1405 aa).

C70, C72, C85, and C88 together coordinate Zn(2+). The Mg(2+) site is built by D460, D462, and D464. Residues C815, C889, C896, and C899 each contribute to the Zn(2+) site. The disordered stretch occupies residues L1363–E1388.

This sequence belongs to the RNA polymerase beta' chain family. As to quaternary structure, the RNAP catalytic core consists of 2 alpha, 1 beta, 1 beta' and 1 omega subunit. When a sigma factor is associated with the core the holoenzyme is formed, which can initiate transcription. It depends on Mg(2+) as a cofactor. Zn(2+) is required as a cofactor.

It catalyses the reaction RNA(n) + a ribonucleoside 5'-triphosphate = RNA(n+1) + diphosphate. Functionally, DNA-dependent RNA polymerase catalyzes the transcription of DNA into RNA using the four ribonucleoside triphosphates as substrates. The sequence is that of DNA-directed RNA polymerase subunit beta' from Chromohalobacter salexigens (strain ATCC BAA-138 / DSM 3043 / CIP 106854 / NCIMB 13768 / 1H11).